A 776-amino-acid polypeptide reads, in one-letter code: Glucocorticoid receptor (776 aa).

Disordered regions lie at residues 1–25 (MDPK…YNDK), 47–86 (SCPT…PQPD), and 394–415 (SSPG…STGP). The modulating stretch occupies residues 1-419 (MDPKDLLKPS…STSTGPPPKL (419 aa)). The segment covering 47–83 (SCPTSTASQSNTRQQQHFQKQLTATGDSTNGLNNNVP) has biased composition (polar residues). Positions 403–413 (SPSPSTSSTST) are enriched in low complexity. NR C4-type zinc fingers lie at residues 420-440 (CLVC…CGSC) and 456-480 (CAGR…YRKC). A DNA-binding region (nuclear receptor) is located at residues 420 to 485 (CLVCSDEASG…RYRKCLQAGM (66 aa)). The interval 486–522 (NLEARKTKKKIKGIQQSTTATARESPETSMTRTLVPA) is hinge. One can recognise an NR LBD domain in the interval 523–757 (SVAQLTPTLI…FPDMLSEIIS (235 aa)).

The protein belongs to the nuclear hormone receptor family. NR3 subfamily. Heteromultimeric cytoplasmic complex with HSP90. Upon ligand binding the complex undergoes a conformation change and moves to the nucleus, where it dissociates. Binds to DNA as a homodimer, and as heterodimer with NR3C2. Interaction with numerous other transcription factors modulates transcription activation. As to expression, expressed in liver with relative abundance.

Its subcellular location is the cytoplasm. It localises to the nucleus. The protein resides in the mitochondrion. It is found in the cytoskeleton. The protein localises to the spindle. Its subcellular location is the microtubule organizing center. It localises to the centrosome. Its function is as follows. Receptor for glucocorticoids (GC). Has a dual mode of action: as a transcription factor that binds to glucocorticoid response elements (GRE), both for nuclear and mitochondrial DNA, and as a modulator of other transcription factors. Affects inflammatory responses, cellular proliferation and differentiation in target tissues. Involved in chromatin remodeling. Plays a role in rapid mRNA degradation by binding to the 5' UTR of target mRNAs and interacting with PNRC2 in a ligand-dependent manner which recruits the RNA helicase UPF1 and the mRNA-decapping enzyme DCP1A, leading to RNA decay. Could act as a coactivator for STAT5-dependent transcription upon growth hormone (GH) stimulation and could reveal an essential role of hepatic GR in the control of body growth. Mediates glucocorticoid-induced apoptosis. Promotes accurate chromosome segregation during mitosis. May act as a tumor suppressor. May play a negative role in adipogenesis through the regulation of lipolytic and antilipogenic gene expression. This chain is Glucocorticoid receptor (nr3c1), found in Xenopus laevis (African clawed frog).